The following is an 80-amino-acid chain: U19-lycotoxin-Ls1a (80 aa).

The signal sequence occupies residues Met-1–Ala-22. Residues Gln-23 to Arg-34 constitute a propeptide that is removed on maturation. Intrachain disulfides connect Cys-36–Cys-50, Cys-43–Cys-55, Cys-49–Cys-66, and Cys-57–Cys-64.

This sequence belongs to the neurotoxin 02 (plectoxin) family. 05 (U19-lycotoxin) subfamily. In terms of tissue distribution, expressed by the venom gland.

Its subcellular location is the secreted. The sequence is that of U19-lycotoxin-Ls1a from Lycosa singoriensis (Wolf spider).